The primary structure comprises 106 residues: Protein U4 (106 aa).

Residues Phe-5–Val-25 traverse the membrane as a helical segment.

The protein belongs to the nanovirus U4 protein family.

Its subcellular location is the membrane. The chain is Protein U4 (DNA-U4) from Cicer arietinum (Chickpea).